A 796-amino-acid polypeptide reads, in one-letter code: Protein translocase subunit SecA 2 (796 aa).

Residues Gln-84, 102–106 (GEGKT), and Asp-496 contribute to the ATP site.

It belongs to the SecA family. Monomer and homodimer. Part of the essential Sec protein translocation apparatus which comprises SecA, SecYEG and auxiliary proteins SecDF. Other proteins may also be involved.

The protein resides in the cell membrane. The protein localises to the cytoplasm. The catalysed reaction is ATP + H2O + cellular proteinSide 1 = ADP + phosphate + cellular proteinSide 2.. Part of the Sec protein translocase complex. Interacts with the SecYEG preprotein conducting channel. Has a central role in coupling the hydrolysis of ATP to the transfer of proteins into and across the cell membrane, serving as an ATP-driven molecular motor driving the stepwise translocation of polypeptide chains across the membrane. In Staphylococcus aureus (strain MSSA476), this protein is Protein translocase subunit SecA 2.